Consider the following 445-residue polypeptide: Ribosomal protein uS12 methylthiotransferase RimO (445 aa).

The MTTase N-terminal domain occupies 6-121 (KKVAVVTLGC…ILETLEEAEK (116 aa)). Residues C15, C50, C84, C159, C163, and C166 each contribute to the [4Fe-4S] cluster site. The Radical SAM core domain maps to 145–375 (LSPKQYAYVK…MELQHDIAYE (231 aa)). A TRAM domain is found at 378–445 (QRWVGQTLKV…SYDLMGEVVQ (68 aa)).

The protein belongs to the methylthiotransferase family. RimO subfamily. [4Fe-4S] cluster is required as a cofactor.

It is found in the cytoplasm. The catalysed reaction is L-aspartate(89)-[ribosomal protein uS12]-hydrogen + (sulfur carrier)-SH + AH2 + 2 S-adenosyl-L-methionine = 3-methylsulfanyl-L-aspartate(89)-[ribosomal protein uS12]-hydrogen + (sulfur carrier)-H + 5'-deoxyadenosine + L-methionine + A + S-adenosyl-L-homocysteine + 2 H(+). In terms of biological role, catalyzes the methylthiolation of an aspartic acid residue of ribosomal protein uS12. The polypeptide is Ribosomal protein uS12 methylthiotransferase RimO (Desulfitobacterium hafniense (strain Y51)).